The primary structure comprises 778 residues: Serine/threonine-protein kinase BRSK1 (778 aa).

Over residues 1–12 the composition is skewed to gly residues; sequence MSSGSKEGGGGS. The tract at residues 1 to 29 is disordered; the sequence is MSSGSKEGGGGSPAYHLPHPHPHPPQHAQ. The Protein kinase domain maps to 34-285; sequence YRLEKTLGKG…LEQIQKHPWY (252 aa). Residues 40–48 and K63 contribute to the ATP site; that span reads LGKGQTGLV. D156 serves as the catalytic Proton acceptor. T189 carries the phosphothreonine; by LKB1 modification. S193 is subject to Phosphoserine. Positions 314–356 constitute a UBA domain; the sequence is ELDPDVLESMASLGCFRDRERLHRELRSEEENQEKMIYYLLLD. Residues 362-383 are compositionally biased toward basic and acidic residues; it reads PSCEDQDLPPRNDVDPPRKRVD. A disordered region spans residues 362–548; the sequence is PSCEDQDLPP…SPGGGVGGAA (187 aa). A phosphoserine mark is found at S399, S443, S447, and S450. Residues 430–457 are compositionally biased toward low complexity; sequence SRSVSGASTGLSSSPLSSPRSPVFSFSP. 4 positions are modified to omega-N-methylarginine: R466, R481, R484, and R498. A compositionally biased stretch (pro residues) spans 491–508; that stretch reads QPPPPSARSTPLPGPPGS. S508 is modified (phosphoserine). Residues 509–533 show a composition bias toward low complexity; it reads PRSSGGTPLHSPLHTPRASPTGTPG. Residue R525 is modified to Omega-N-methylarginine. Phosphothreonine is present on residues T529 and T535. R550 is modified (omega-N-methylarginine). T583 bears the Phosphothreonine mark. S586, S587, and S601 each carry phosphoserine. Positions 719 to 778 are disordered; it reads QPSVQALADEKNGAQTRPAGTPPRSLQPPPGRPDPDLSSSPRRGPSKDKKLLATNGTPLP.

This sequence belongs to the protein kinase superfamily. CAMK Ser/Thr protein kinase family. SNF1 subfamily. The cofactor is Mg(2+). Phosphorylated at Thr-189 by STK11/LKB1 in complex with STE20-related adapter-alpha (STRADA) pseudo kinase and CAB39. Not phosphorylated at Thr-189 by CaMKK2. In contrast, it is phosphorylated and activated by CaMKK1. May be inactivated via dephosphorylation of Thr-189 by PP2C. May be autophosphorylated. As to expression, mainly present in brain. Present in presynaptic nerve terminals (at protein level).

It localises to the cytoplasm. The protein localises to the nucleus. It is found in the cytoskeleton. Its subcellular location is the microtubule organizing center. The protein resides in the centrosome. It localises to the synapse. The protein localises to the presynaptic active zone. It is found in the cytoplasmic vesicle. Its subcellular location is the secretory vesicle. The protein resides in the synaptic vesicle. The catalysed reaction is L-seryl-[protein] + ATP = O-phospho-L-seryl-[protein] + ADP + H(+). It carries out the reaction L-threonyl-[protein] + ATP = O-phospho-L-threonyl-[protein] + ADP + H(+). It catalyses the reaction L-seryl-[tau protein] + ATP = O-phospho-L-seryl-[tau protein] + ADP + H(+). The enzyme catalyses L-threonyl-[tau protein] + ATP = O-phospho-L-threonyl-[tau protein] + ADP + H(+). Activated by phosphorylation on Thr-189 by STK11/LKB1. In terms of biological role, serine/threonine-protein kinase that plays a key role in polarization of neurons and centrosome duplication. Phosphorylates CDC25B, CDC25C, MAPT/TAU, RIMS1, TUBG1, TUBG2 and WEE1. Following phosphorylation and activation by STK11/LKB1, acts as a key regulator of polarization of cortical neurons, probably by mediating phosphorylation of microtubule-associated proteins such as MAPT/TAU at 'Thr-523' and 'Ser-573'. Also regulates neuron polarization by mediating phosphorylation of WEE1 at 'Ser-642' in postmitotic neurons, leading to down-regulate WEE1 activity in polarized neurons. Also acts as a positive regulator of centrosome duplication by mediating phosphorylation of gamma-tubulin (TUBG1 and TUBG2) at 'Ser-131', leading to translocation of gamma-tubulin and its associated proteins to the centrosome. Involved in the UV-induced DNA damage checkpoint response, probably by inhibiting CDK1 activity through phosphorylation and activation of WEE1, and inhibition of CDC25B and CDC25C. In neurons, localizes to synaptic vesicles and plays a role in neurotransmitter release, possibly by phosphorylating RIMS1. In Rattus norvegicus (Rat), this protein is Serine/threonine-protein kinase BRSK1 (Brsk1).